A 288-amino-acid chain; its full sequence is Putative alkaline ceramidase dcd3A (288 aa).

Residue N23 is glycosylated (N-linked (GlcNAc...) asparagine). 7 consecutive transmembrane segments (helical) span residues 41 to 61 (IISLFGIYGIWIMMPNFGTGV), 78 to 98 (VILSYISLIVVGVGSAFYHAT), 105 to 125 (LFDELPMIYTALIMLYIMVTV), 146 to 166 (HLLPYLLIAYGLFVTITILVI), 172 to 192 (ILQVSFGALVFYVVFHSIYLI), 206 to 226 (SYLYKYAFVSMLVGFTCWVVE), and 240 to 260 (LHAFWHFFTGMSTYVWTQFLI).

The protein belongs to the alkaline ceramidase family.

It localises to the membrane. The sequence is that of Putative alkaline ceramidase dcd3A (dcd3A) from Dictyostelium discoideum (Social amoeba).